The following is a 127-amino-acid chain: Glycine cleavage system H protein 1 (127 aa).

The Lipoyl-binding domain maps to 20–101 (LLTVGITAYA…LGEAWFFRFR (82 aa)). Lys-60 carries the N6-lipoyllysine modification.

Belongs to the GcvH family. In terms of assembly, the glycine cleavage system is composed of four proteins: P, T, L and H. It depends on (R)-lipoate as a cofactor.

Its function is as follows. The glycine cleavage system catalyzes the degradation of glycine. The H protein shuttles the methylamine group of glycine from the P protein to the T protein. This chain is Glycine cleavage system H protein 1, found in Pseudomonas aeruginosa (strain ATCC 15692 / DSM 22644 / CIP 104116 / JCM 14847 / LMG 12228 / 1C / PRS 101 / PAO1).